Reading from the N-terminus, the 2752-residue chain is Serine/arginine repetitive matrix protein 2 (2752 aa).

M1 carries the N-acetylmethionine modification. A coiled-coil region spans residues 60–92; it reads HERKRRVELRCLELEEMMEEQGYEEQQIQEKVA. K101 is subject to N6-acetyllysine. Glycyl lysine isopeptide (Lys-Gly) (interchain with G-Cter in SUMO2) cross-links involve residues K108 and K130. The tract at residues 141–2131 is disordered; sequence ISDSYVDGSS…MSPTPLDRCR (1991 aa). Y145 carries the post-translational modification Phosphotyrosine. Position 169 is an N6-acetyllysine (K169). The segment covering 175 to 185 has biased composition (low complexity); it reads RESSSSRSPTP. 2 stretches are compositionally biased toward basic residues: residues 186 to 197 and 207 to 249; these read KQKKKKKKKDRG and RERK…KRSR. The tract at residues 197-259 is sufficient for RNA-binding; sequence GRRSESSSPR…STTPAPKSRR (63 aa). Residues S220 and S222 each carry the phosphoserine modification. Residues 263–290 show a composition bias toward low complexity; that stretch reads STSADSASSSDTSRSRSRSAAAKTHTTA. A Phosphothreonine modification is found at T286. 5 positions are modified to phosphoserine: S295, S297, S300, S322, and S323. Over residues 313 to 333 the composition is skewed to polar residues; it reads PGTTSTQRPSSPETATKQPSS. Positions 335-347 are enriched in basic and acidic residues; that stretch reads YEDKDKDKKEKSA. A compositionally biased stretch (low complexity) spans 348–360; sequence TRPSPSPERSSTG. Phosphoserine is present on residues S351, S353, S357, and S358. Residues T359 and T367 each carry the phosphothreonine modification. S377 is modified (phosphoserine). Positions 380 to 398 are enriched in polar residues; it reads PLATTPLSQEPVNPPSEAS. 2 positions are modified to phosphothreonine: T383 and T384. 5 positions are modified to phosphoserine: S387, S395, S398, S404, and S408. A compositionally biased stretch (basic and acidic residues) spans 399-410; sequence PTRDRSPPKSPE. Over residues 411-421 the composition is skewed to low complexity; sequence KLPQSSSSESS. Residues S424, S435, S436, S437, S440, and S454 each carry the phosphoserine modification. The segment covering 461 to 483 has biased composition (basic residues); sequence NRSHGRAKRDKSHSHTPSRRMGR. Phosphoserine is present on residues S484, S486, S506, S508, S510, S534, S536, and S543. Positions 491 to 536 are enriched in basic residues; it reads KRGRSRSRTPTKRGHSRSRSPQWRRSRSAQRWGRSRSPQRRGRSRS. The span at 537–546 shows a compositional bias: low complexity; that stretch reads PQRPGWSRSR. Composition is skewed to basic residues over residues 547–564, 571–723, and 732–742; these read NTQRRGRSRSARRGRSHS, GRSR…RRGR, and NKSRTSQRRSR. Residues S702, S704, and S706 each carry the phosphoserine modification. Phosphoserine occurs at positions 778, 780, and 783. The span at 790–805 shows a compositional bias: low complexity; it reads SQTPPRRSRSGSSQPK. Residues 806–816 are compositionally biased toward basic residues; sequence AKSRTPPRRSR. The span at 828–841 shows a compositional bias: low complexity; that stretch reads KTPSRQSHSSSSPH. 2 positions are modified to phosphoserine: S846 and S854. Over residues 849–869 the composition is skewed to polar residues; sequence PPRQGSITSPQANEQSVTPQR. T856 is subject to Phosphothreonine. Residues S857 and S864 each carry the phosphoserine modification. Residue T866 is modified to Phosphothreonine. Phosphoserine is present on residues S871, S875, S876, S908, S935, S950, S952, S954, S957, S968, S970, S972, S973, and S974. 2 stretches are compositionally biased toward low complexity: residues 901 to 917 and 924 to 945; these read SSTPPRQSPSRSSSPQP and SPRQRSHSGSSSPSPSRVTSRT. Residues T977 and T983 each carry the phosphothreonine modification. Phosphoserine occurs at positions 992 and 994. Phosphotyrosine is present on Y996. At T1003 the chain carries Phosphothreonine. Positions 1008-1017 are enriched in low complexity; sequence SLSGSKSPCP. 6 positions are modified to phosphoserine: S1010, S1014, S1024, S1028, S1032, and S1042. Residues 1040-1064 show a composition bias toward polar residues; sequence KSSTPPGESYFGVSSLQLKGQSQTS. Position 1043 is a phosphothreonine (T1043). Y1049 is modified (phosphotyrosine). Phosphoserine occurs at positions 1064, 1069, 1072, 1073, 1083, 1099, 1101, 1102, and 1103. Polar residues predominate over residues 1071–1092; sequence TSSPEVRQSHSESPSLQSKSQT. Residues 1093 to 1104 show a composition bias toward low complexity; it reads SPKGGRSRSSSP. T1106 bears the Phosphothreonine mark. Phosphoserine is present on residues S1112, S1122, S1124, S1129, S1132, S1152, S1179, S1188, and S1198. The span at 1132-1159 shows a compositional bias: polar residues; the sequence is SPEQSRFQSDSSSYPTVDSNSLLGQSRL. Basic and acidic residues predominate over residues 1204–1214; the sequence is DTLRTPPRERS. T1208 is subject to Phosphothreonine. Phosphoserine is present on residues S1214, S1219, S1227, S1254, S1257, S1258, S1266, S1270, and S1271. The segment covering 1216 to 1233 has biased composition (polar residues); that stretch reads AGSSPETKEQNSALPTSS. The span at 1283–1292 shows a compositional bias: polar residues; the sequence is TLDQSQSQAS. Residues S1311, S1318, S1320, S1326, S1329, S1336, S1348, S1368, S1382, S1383, S1384, S1387, S1401, S1403, and S1404 each carry the phosphoserine modification. Polar residues predominate over residues 1318-1328; it reads SNSPLRENSFG. Residues 1376–1386 are compositionally biased toward polar residues; that stretch reads TRSSGHSSSEL. T1413 is subject to Phosphothreonine. A phosphoserine mark is found at S1415, S1421, S1423, and S1424. T1434 bears the Phosphothreonine mark. The segment covering 1441–1452 has biased composition (low complexity); that stretch reads SGSSPGLRDGSG. S1444 and S1451 each carry phosphoserine. T1453 is modified (phosphothreonine). Positions 1453–1463 are enriched in polar residues; the sequence is TPSRHSLSGSS. 4 positions are modified to phosphoserine: S1458, S1460, S1462, and S1463. The residue at position 1472 (T1472) is a Phosphothreonine. S1482 and S1483 each carry phosphoserine. Phosphothreonine is present on T1492. Residues S1497, S1499, S1501, and S1502 each carry the phosphoserine modification. T1511 is modified (phosphothreonine). Phosphoserine is present on residues S1517, S1519, S1521, and S1522. At T1531 the chain carries Phosphothreonine. A compositionally biased stretch (polar residues) spans 1534–1544; the sequence is GQRSRSGSSQE. S1537, S1539, S1541, S1542, and S1552 each carry phosphoserine. Residues 1555 to 1567 are compositionally biased toward basic and acidic residues; it reads ERSESDSSPDSKA. Basic residues predominate over residues 1568–1577; that stretch reads KTRTPLRQRS. Phosphoserine is present on residues S1577, S1579, S1581, S1582, S1598, S1600, S1601, S1616, S1620, S1621, S1648, S1658, S1691, S1693, and S1694. Residues 1638–1657 are compositionally biased toward low complexity; that stretch reads SGSSSKGRGPSPEGSSSTES. Basic residues predominate over residues 1681-1691; the sequence is KSRTPPRRRSS. A Phosphothreonine modification is found at T1698. Phosphoserine is present on residues S1727, S1729, S1731, S1732, S1762, and S1764. 2 stretches are compositionally biased toward basic residues: residues 1769–1789 and 1798–1816; these read GLQRSRSRSRREKTRTTRRRD and SRRRQRSRSRSRVTRRRRG. Residues S1818, S1822, S1854, S1857, S1876, and S1878 each carry the phosphoserine modification. Positions 1834-1854 are enriched in basic residues; the sequence is SSRRRRGRSRTPPTSRKRSRS. Residues 1862–2068 are compositionally biased toward basic residues; it reads KRSRSRASPA…PRTARGKRSL (207 aa). A Phosphothreonine modification is found at T1880. S1884 and S1890 each carry phosphoserine. T1892 bears the Phosphothreonine mark. 5 positions are modified to phosphoserine: S1893, S1916, S1919, S1923, and S1925. T1927 and T1931 each carry phosphothreonine. Phosphoserine occurs at positions 1946 and 1948. Residues T1950 and T1954 each carry the phosphothreonine modification. A phosphoserine mark is found at S1958 and S1960. T1962 and T1966 each carry phosphothreonine. Phosphoserine occurs at positions 1970, 1972, and 1975. A Phosphothreonine modification is found at T1978. 8 positions are modified to phosphoserine: S1984, S1987, S1996, S1999, S2008, S2011, S2018, and S2020. T2022 carries the post-translational modification Phosphothreonine. S2030 and S2032 each carry phosphoserine. T2034 is modified (phosphothreonine). 4 positions are modified to phosphoserine: S2042, S2044, S2046, and S2067. Residue T2069 is modified to Phosphothreonine. Positions 2070–2095 are enriched in low complexity; it reads RSPPAIRRRSASGSSSDRSRSATPPA. 2 positions are modified to phosphoserine: S2071 and S2090. T2092 carries the phosphothreonine modification. Polar residues predominate over residues 2097–2124; the sequence is RNHSGSRTPPVALNSSRMSCFSRPSMSP. S2100 and S2102 each carry phosphoserine. T2104 carries the phosphothreonine modification. Phosphoserine occurs at positions 2118, 2121, 2123, and 2132. T2144 bears the Phosphothreonine mark. Residues R2194, R2207, R2231, and R2246 each carry the omega-N-methylarginine modification. Position 2272 is a phosphoserine (S2272). 2 positions are modified to omega-N-methylarginine: R2274 and R2288. A phosphothreonine mark is found at T2289, T2291, and T2302. S2310 carries the phosphoserine modification. The segment at 2311-2342 is disordered; the sequence is LTGSGTPPTAANYPSSSRTPQAPASANLVGPR. Phosphothreonine occurs at positions 2316 and 2329. The span at 2317-2334 shows a compositional bias: polar residues; that stretch reads PPTAANYPSSSRTPQAPA. S2335 carries the post-translational modification Phosphoserine. R2342 is modified (omega-N-methylarginine). Phosphoserine is present on residues S2343, S2368, and S2376. T2381 carries the phosphothreonine modification. S2382 bears the Phosphoserine mark. R2384 carries the post-translational modification Asymmetric dimethylarginine; alternate. The residue at position 2384 (R2384) is an Omega-N-methylarginine; alternate. Residues 2389-2752 form a disordered region; the sequence is AYERVSGRTS…PMRHRSSRSP (364 aa). Phosphoserine is present on residues S2394, S2398, and S2407. Position 2409 is a phosphothreonine (T2409). Residues S2412, S2415, S2426, S2429, S2449, and S2453 each carry the phosphoserine modification. The segment covering 2426–2439 has biased composition (polar residues); sequence SPSSRMGQAPSQSL. The segment covering 2455–2473 has biased composition (polar residues); sequence FSDQSRCLIAQTTPVAGSQ. Low complexity-rich tracts occupy residues 2474–2487, 2515–2526, and 2533–2567; these read SLSSGAVATTTSSA, AQQPSALAALQP, and SSSSSSSSSSSSSSSSSSSSSSSSGSSSSDSEGSS. S2581 is modified (phosphoserine). T2583 is modified (phosphothreonine). A Glycyl lysine isopeptide (Lys-Gly) (interchain with G-Cter in SUMO2) cross-link involves residue K2587. T2599 is subject to Phosphothreonine. Residues 2608–2648 are compositionally biased toward low complexity; the sequence is SSSSSSSSSSSSSSSSSSSSSSSSSSSSSSSSSSSSSSSSS. Over residues 2651-2668 the composition is skewed to pro residues; sequence PAKPGPQALPKPASPKKP. Phosphoserine is present on residues S2664, S2675, S2677, S2684, S2688, S2690, S2692, S2694, S2702, and S2706. The segment covering 2669 to 2689 has biased composition (basic and acidic residues); that stretch reads PPGERRSRSPRKPIDSLRDSR. Residues 2707–2716 are compositionally biased toward low complexity; sequence PRDQQSSSSE. The segment covering 2717–2729 has biased composition (basic and acidic residues); it reads RGSRRGQRGDSRS. At T2738 the chain carries Phosphothreonine. At S2740 the chain carries Phosphoserine. A compositionally biased stretch (basic residues) spans 2743-2752; it reads PMRHRSSRSP.

The protein belongs to the CWC21 family. As to quaternary structure, component of pre-catalytic, catalytic and post-catalytic spliceosome complexes. Found in a pre-mRNA splicing complex with SFRS4, SFRS5, SNRP70, SNRPA1, SRRM1 and SRRM2. Component of the minor spliceosome, which splices U12-type introns. Interacts with DHX8. Interacts with CACTIN. In terms of tissue distribution, expressed in liver, placenta, and white blood cells.

The protein resides in the nucleus. It is found in the nucleus speckle. Required for pre-mRNA splicing as component of the spliceosome. As a component of the minor spliceosome, involved in the splicing of U12-type introns in pre-mRNAs. This is Serine/arginine repetitive matrix protein 2 (SRRM2) from Homo sapiens (Human).